The primary structure comprises 364 residues: ATP synthase gamma chain, chloroplastic (364 aa).

A chloroplast-targeting transit peptide spans 1–41 (MACSLSFSSSVSTFHLPTTTQSTQAPPNNATTLPTTNPIQC). The interval 17–36 (PTTTQSTQAPPNNATTLPTT) is disordered. Low complexity predominate over residues 25 to 36 (APPNNATTLPTT). The active site involves C130. An intrachain disulfide couples C240 to C246.

This sequence belongs to the ATPase gamma chain family. In terms of assembly, F-type ATPases have 2 components, CF(1) - the catalytic core - and CF(0) - the membrane proton channel. CF(1) has five subunits: alpha(3), beta(3), gamma(1), delta(1), epsilon(1). CF(0) has four main subunits: a, b, b' and c. Disulfide bond; Cys-240 and Cys-246 are known to form a disulfide bridge in the dark which gives rise to an inactive enzyme. Activation can be brought about by a ferredoxin-dependent reduction of the disulfide bond in the light.

It is found in the plastid. Its subcellular location is the chloroplast thylakoid membrane. Its function is as follows. Produces ATP from ADP in the presence of a proton gradient across the membrane. The gamma chain is believed to be important in regulating ATPase activity and the flow of protons through the CF(0) complex. The sequence is that of ATP synthase gamma chain, chloroplastic (ATPC) from Spinacia oleracea (Spinach).